The chain runs to 394 residues: Elongation factor Tu (394 aa).

A tr-type G domain is found at 10–204 (KPHVNVGTIG…HLDNYIPEPE (195 aa)). The interval 19–26 (GHVDHGKT) is G1. 19–26 (GHVDHGKT) provides a ligand contact to GTP. Thr-26 is a binding site for Mg(2+). A G2 region spans residues 60–64 (GITIN). The interval 81 to 84 (DCPG) is G3. GTP contacts are provided by residues 81-85 (DCPGH) and 136-139 (NKCD). The G4 stretch occupies residues 136 to 139 (NKCD). Residues 174–176 (SAL) are G5.

It belongs to the TRAFAC class translation factor GTPase superfamily. Classic translation factor GTPase family. EF-Tu/EF-1A subfamily. As to quaternary structure, monomer.

Its subcellular location is the cytoplasm. It carries out the reaction GTP + H2O = GDP + phosphate + H(+). Its function is as follows. GTP hydrolase that promotes the GTP-dependent binding of aminoacyl-tRNA to the A-site of ribosomes during protein biosynthesis. This is Elongation factor Tu from Histophilus somni (strain 129Pt) (Haemophilus somnus).